We begin with the raw amino-acid sequence, 239 residues long: LexA repressor (239 aa).

The H-T-H motif DNA-binding region spans 27-47 (FDEMKDALDLASKSGIHRLIT). Residues Ser-159 and Lys-197 each act as for autocatalytic cleavage activity in the active site.

It belongs to the peptidase S24 family. In terms of assembly, homodimer.

The catalysed reaction is Hydrolysis of Ala-|-Gly bond in repressor LexA.. Its function is as follows. Represses a number of genes involved in the response to DNA damage (SOS response), including recA and lexA. In the presence of single-stranded DNA, RecA interacts with LexA causing an autocatalytic cleavage which disrupts the DNA-binding part of LexA, leading to derepression of the SOS regulon and eventually DNA repair. This chain is LexA repressor, found in Rhizobium radiobacter (Agrobacterium tumefaciens).